The chain runs to 242 residues: Carboxy-S-adenosyl-L-methionine synthase (242 aa).

S-adenosyl-L-methionine contacts are provided by residues Y39, 64 to 66 (GCS), 89 to 90 (DN), 117 to 118 (DI), N132, and R199.

The protein belongs to the class I-like SAM-binding methyltransferase superfamily. Cx-SAM synthase family. As to quaternary structure, homodimer.

The enzyme catalyses prephenate + S-adenosyl-L-methionine = carboxy-S-adenosyl-L-methionine + 3-phenylpyruvate + H2O. In terms of biological role, catalyzes the conversion of S-adenosyl-L-methionine (SAM) to carboxy-S-adenosyl-L-methionine (Cx-SAM). The chain is Carboxy-S-adenosyl-L-methionine synthase from Vibrio atlanticus (strain LGP32) (Vibrio splendidus (strain Mel32)).